Consider the following 447-residue polypeptide: NADP-specific glutamate dehydrogenase (447 aa).

Substrate is bound by residues Lys92, Gln113, and Lys116. Lys128 acts as the Proton donor in catalysis. Substrate is bound at residue Gly167. Residues Thr212 and Asn243 each contribute to the NADP(+) site. Ser379 lines the substrate pocket.

It belongs to the Glu/Leu/Phe/Val dehydrogenases family. As to quaternary structure, homohexamer.

The enzyme catalyses L-glutamate + NADP(+) + H2O = 2-oxoglutarate + NH4(+) + NADPH + H(+). Catalyzes the reversible oxidative deamination of glutamate to alpha-ketoglutarate and ammonia. The polypeptide is NADP-specific glutamate dehydrogenase (gdh) (Corynebacterium glutamicum (strain ATCC 13032 / DSM 20300 / JCM 1318 / BCRC 11384 / CCUG 27702 / LMG 3730 / NBRC 12168 / NCIMB 10025 / NRRL B-2784 / 534)).